We begin with the raw amino-acid sequence, 329 residues long: Malate dehydrogenase (329 aa).

Residue 12–18 participates in NAD(+) binding; it reads GAAGQIG. Substrate contacts are provided by Arg-93 and Arg-99. Residues Asn-106, Gln-113, and 130-132 each bind NAD(+); that span reads TGN. Substrate contacts are provided by Asn-132 and Arg-163. The active-site Proton acceptor is the His-188.

Belongs to the LDH/MDH superfamily. MDH type 2 family.

It catalyses the reaction (S)-malate + NAD(+) = oxaloacetate + NADH + H(+). Its function is as follows. Catalyzes the reversible oxidation of malate to oxaloacetate. In Mycobacterium bovis (strain ATCC BAA-935 / AF2122/97), this protein is Malate dehydrogenase.